The sequence spans 288 residues: Ankyrin repeat and SOCS box protein 8 (288 aa).

Serine 17 carries the post-translational modification Phosphoserine. 4 ANK repeats span residues 52–81, 85–113, 117–146, and 150–179; these read GTLKPLHCACMVSDADCVELLLEKGAEVNA, YNRTALHYAAERDEACVEVLLEYGANPNA, NRDTPLHWAAFKNNAECVRALLESGASVNA, and NNDTPLSWAAMKGNLESVSILLDYGAEVRV. The SOCS box domain occupies 235-288; the sequence is QLCEKLTVLCSAPGTLKTLARYAVRRSLGLQYLPDAVKGLPLPVSLKDYLLLLE.

It belongs to the ankyrin SOCS box (ASB) family. Interacts with TBK1; this interaction promotes TBK1 proteasomal degradation. Phosphorylated by TBK1.

The protein resides in the cytoplasm. It participates in protein modification; protein ubiquitination. Its function is as follows. May be a substrate-recognition component of a SCF-like ECS (Elongin-Cullin-SOCS-box protein) E3 ubiquitin-protein ligase complex which mediates the ubiquitination and subsequent proteasomal degradation of target proteins. Inhibits IFN-beta production through the IRF3 signaling pathway by targeting TBK1 via 'Lys-48'-linked ubiquitination, leading to its proteasomal degradation. The chain is Ankyrin repeat and SOCS box protein 8 (Asb8) from Mus musculus (Mouse).